The sequence spans 419 residues: N-acylglucosamine 2-epimerase (419 aa).

The segment at Leu-185–Leu-206 is leucine-zipper. Phosphoserine is present on Ser-418.

It belongs to the N-acylglucosamine 2-epimerase family. Homodimer. Forms a heterodimer with renin and inhibits its activity. As to expression, kidney, adrenal gland, brain, lung, spleen, ovary, testis and heart.

It catalyses the reaction an N-acyl-D-glucosamine = an N-acyl-D-mannosamine. It functions in the pathway amino-sugar metabolism; N-acetylneuraminate degradation. In terms of biological role, catalyzes the interconversion of N-acetylglucosamine to N-acetylmannosamine. Involved in the N-glycolylneuraminic acid (Neu5Gc) degradation pathway. The polypeptide is N-acylglucosamine 2-epimerase (Renbp) (Rattus norvegicus (Rat)).